We begin with the raw amino-acid sequence, 494 residues long: Alpha-amylase-related protein (494 aa).

The signal sequence occupies residues 1–20 (MIKFALALTLCLAGASLSLA). Pyrrolidone carboxylic acid is present on Gln21. The cysteines at positions 48 and 104 are disulfide-linked. 3 residues coordinate Ca(2+): Asn118, Gln169, and Asp178. Residues Cys157 and Cys171 are joined by a disulfide bond. Residue Arg206 coordinates chloride. Catalysis depends on Asp208, which acts as the Nucleophile. His212 contributes to the Ca(2+) binding site. Catalysis depends on Glu245, which acts as the Proton donor. 2 residues coordinate chloride: Asn308 and Arg343. 3 disulfide bridges follow: Cys376–Cys382, Cys418–Cys441, and Cys448–Cys460.

Belongs to the glycosyl hydrolase 13 family. Monomer. Ca(2+) serves as cofactor. The cofactor is chloride.

The protein localises to the secreted. It catalyses the reaction Endohydrolysis of (1-&gt;4)-alpha-D-glucosidic linkages in polysaccharides containing three or more (1-&gt;4)-alpha-linked D-glucose units.. This Drosophila lini (Fruit fly) protein is Alpha-amylase-related protein (Amyrel).